Here is a 423-residue protein sequence, read N- to C-terminus: Phthiocerol/phthiodiolone dimycocerosyl transferase (423 aa).

The active-site Proton acceptor is the His125.

This sequence belongs to the acyltransferase PapA5 family. Monomer. Interacts directly with the acyl carrier protein (ACP) domain of the mycocerosic acid synthase (mas) protein.

It carries out the reaction 2 a mycocerosyl-[mycocerosic acid synthase] + a phthiocerol = a dimycocerosyl phthiocerol + 2 holo-[mycocerosic acid synthase].. It catalyses the reaction 2 a mycocerosyl-[mycocerosic acid synthase] + a phthiodiolone = a dimycocerosyl phthiodiolone + 2 holo-[mycocerosic acid synthase].. The enzyme catalyses 2 a mycocerosyl-[mycocerosic acid synthase] + a phenolphthiocerol = a dimycocerosyl phenolphthiocerol + 2 holo-[mycocerosic acid synthase].. In terms of biological role, catalyzes diesterification of phthiocerol, phthiodiolone, and phenolphthiocerol with mycocerosic acids, the final step in the phthiocerol, phthiodiolone and phenolphthiocerol dimycocerosate esters (PDIM) synthesis. Can directly transfer the mycocerosate bound to the mycocerosic acid synthase (mas) onto the substrate alcohols. This chain is Phthiocerol/phthiodiolone dimycocerosyl transferase (papA5), found in Mycobacterium leprae (strain TN).